Reading from the N-terminus, the 468-residue chain is Methylenetetrahydrofolate--tRNA-(uracil-5-)-methyltransferase TrmFO (468 aa).

Position 10–15 (glycine 10–glycine 15) interacts with FAD.

This sequence belongs to the MnmG family. TrmFO subfamily. The cofactor is FAD.

It localises to the cytoplasm. It carries out the reaction uridine(54) in tRNA + (6R)-5,10-methylene-5,6,7,8-tetrahydrofolate + NADH + H(+) = 5-methyluridine(54) in tRNA + (6S)-5,6,7,8-tetrahydrofolate + NAD(+). The catalysed reaction is uridine(54) in tRNA + (6R)-5,10-methylene-5,6,7,8-tetrahydrofolate + NADPH + H(+) = 5-methyluridine(54) in tRNA + (6S)-5,6,7,8-tetrahydrofolate + NADP(+). Catalyzes the folate-dependent formation of 5-methyl-uridine at position 54 (M-5-U54) in all tRNAs. This chain is Methylenetetrahydrofolate--tRNA-(uracil-5-)-methyltransferase TrmFO, found in Chelativorans sp. (strain BNC1).